The following is a 70-amino-acid chain: ATP synthase subunit c (70 aa).

2 helical membrane passes run 5–25 (AAGI…AIIV) and 47–67 (FIGV…SFIL).

The protein belongs to the ATPase C chain family. As to quaternary structure, F-type ATPases have 2 components, F(1) - the catalytic core - and F(0) - the membrane proton channel. F(1) has five subunits: alpha(3), beta(3), gamma(1), delta(1), epsilon(1). F(0) has three main subunits: a(1), b(2) and c(10-14). The alpha and beta chains form an alternating ring which encloses part of the gamma chain. F(1) is attached to F(0) by a central stalk formed by the gamma and epsilon chains, while a peripheral stalk is formed by the delta and b chains.

Its subcellular location is the cell membrane. Its function is as follows. F(1)F(0) ATP synthase produces ATP from ADP in the presence of a proton or sodium gradient. F-type ATPases consist of two structural domains, F(1) containing the extramembraneous catalytic core and F(0) containing the membrane proton channel, linked together by a central stalk and a peripheral stalk. During catalysis, ATP synthesis in the catalytic domain of F(1) is coupled via a rotary mechanism of the central stalk subunits to proton translocation. Functionally, key component of the F(0) channel; it plays a direct role in translocation across the membrane. A homomeric c-ring of between 10-14 subunits forms the central stalk rotor element with the F(1) delta and epsilon subunits. This Halalkalibacterium halodurans (strain ATCC BAA-125 / DSM 18197 / FERM 7344 / JCM 9153 / C-125) (Bacillus halodurans) protein is ATP synthase subunit c.